The primary structure comprises 58 residues: Small ribosomal subunit protein bS21B (58 aa).

Belongs to the bacterial ribosomal protein bS21 family.

The protein is Small ribosomal subunit protein bS21B of Trichormus variabilis (strain ATCC 29413 / PCC 7937) (Anabaena variabilis).